A 575-amino-acid polypeptide reads, in one-letter code: Septation ring formation regulator EzrA (575 aa).

Over 1–8 (MSNGQLIY) the chain is Extracellular. The chain crosses the membrane as a helical span at residues 9 to 27 (LMVAIAVILVLAYVVAIFL). Residues 28-575 (RKRNEGRLEA…YEKTRETIRF (548 aa)) lie on the Cytoplasmic side of the membrane. Coiled coils occupy residues 105 to 191 (LKAS…FVTL), 265 to 301 (LYEA…LYDI), 354 to 416 (VRRI…IEKD), and 456 to 526 (TASN…IQEA).

This sequence belongs to the EzrA family.

The protein resides in the cell membrane. In terms of biological role, negative regulator of FtsZ ring formation; modulates the frequency and position of FtsZ ring formation. Inhibits FtsZ ring formation at polar sites. Interacts either with FtsZ or with one of its binding partners to promote depolymerization. This Streptococcus pneumoniae (strain ATCC BAA-255 / R6) protein is Septation ring formation regulator EzrA.